Reading from the N-terminus, the 231-residue chain is Lipoprotein-releasing system ATP-binding protein LolD 2 (231 aa).

An ABC transporter domain is found at V6–A230. G42–S49 lines the ATP pocket.

It belongs to the ABC transporter superfamily. Lipoprotein translocase (TC 3.A.1.125) family. In terms of assembly, the complex is composed of two ATP-binding proteins (LolD) and two transmembrane proteins (LolC and LolE).

It localises to the cell inner membrane. Functionally, part of the ABC transporter complex LolCDE involved in the translocation of mature outer membrane-directed lipoproteins, from the inner membrane to the periplasmic chaperone, LolA. Responsible for the formation of the LolA-lipoprotein complex in an ATP-dependent manner. The sequence is that of Lipoprotein-releasing system ATP-binding protein LolD 2 from Rhodospirillum rubrum (strain ATCC 11170 / ATH 1.1.1 / DSM 467 / LMG 4362 / NCIMB 8255 / S1).